A 178-amino-acid polypeptide reads, in one-letter code: ATP synthase subunit delta (178 aa).

Belongs to the ATPase delta chain family. F-type ATPases have 2 components, F(1) - the catalytic core - and F(0) - the membrane proton channel. F(1) has five subunits: alpha(3), beta(3), gamma(1), delta(1), epsilon(1). F(0) has three main subunits: a(1), b(2) and c(10-14). The alpha and beta chains form an alternating ring which encloses part of the gamma chain. F(1) is attached to F(0) by a central stalk formed by the gamma and epsilon chains, while a peripheral stalk is formed by the delta and b chains.

It localises to the cell membrane. Functionally, f(1)F(0) ATP synthase produces ATP from ADP in the presence of a proton or sodium gradient. F-type ATPases consist of two structural domains, F(1) containing the extramembraneous catalytic core and F(0) containing the membrane proton channel, linked together by a central stalk and a peripheral stalk. During catalysis, ATP synthesis in the catalytic domain of F(1) is coupled via a rotary mechanism of the central stalk subunits to proton translocation. In terms of biological role, this protein is part of the stalk that links CF(0) to CF(1). It either transmits conformational changes from CF(0) to CF(1) or is implicated in proton conduction. The protein is ATP synthase subunit delta of Streptococcus thermophilus (strain ATCC BAA-250 / LMG 18311).